Reading from the N-terminus, the 2062-residue chain is MKKKKGERGGSKEMKKRRSWIIKLEEIQSYQFLCNPWTKSNLMRFLIQILSHRERLIKLFDPRILSTLLLRDLRRSNPYFLVKGIVVLTLSILIYHFNHKSSMIEKKNFYSMKLFPIHNFMELGNETPEEYLKPFTKNWLIFPHLFLSFQLKRSYNRFIEHFDPISFNSGYGRNTNKKDEMISENQGPPSKTHLENNEKDLNLKIDSTLNSTENEYWEPEKDLCEDSFIEREQTKIEIESDLSSKCLSEYYPISWAKELFTEDQRYTEENSFPLERKRFIENFTKSIRYSFFYIWPMDEPCMGGPSATKKPIEDFNLSKRLLKRQQNVFSQYLRDSKSYSLMNRIVDLWKIKTYFEIENSSSNYAIPSDPGWNILNILHNNFRSKTKKIVLEMTDQFTLSITKPSQVHDQIYCNIYYYMNPLYELNKNGSLRSDRIFNHREKLKNQSLWVLLNIIDKADDYLDQIIDKQLSQIDSKNRLEIGTPFNNYRTEALSWYESIRYKIARYSENLFNRFYFINRFSHNLKNQIRTNWIENENLNNVTKDTIDRHSSSWKKIQREWLNRSIIRTDKNINRNLNVYKWSHQTEYFMKYLKHKKNYFQRVFDLIESCTNTNRNKIGWKDYFQFFQHTVKILNSNFDIISNLNSKFDIVISILDSHLNKLKSIDPQLLKKNNLDINDLLDLMGTLIVHLKKLKPFLFLLDDHNLSQRSKLLIDEGTIAPFVPNDIPINPSIIDFFYNEKNRMESFDNTDFSTISNDRENWLNPVKLSDQSSLRASFHGANTLQFFDYLHHPRPNYRKRLPSDMKRIYIKRKNLTYGQLFNLLLIHNNISSLLIGEIGPVHSEKETISLIKSQVSNIFLPKYLQRKRSGEQPFVLIYDLYRSFNLLTQLNPFVRDKRYISSIEEISTTPLTKEQIVNLEKTFCQPFFNRSDSEENNLDKCLKRGFSSNVGLIQTRSYQDDLLSEIFSNKNQEMFHRIQDWFVTKSFKNIIGNEGIDGRSTLSNSSKEEQKIKPSPHFNEPAKKQEMYRISQIDSILSKWDLFKTYMPWFFTSAWCKYLENMLLYTLPEILLHGSNPFVSILQDIKHNIMLKWNILWELSHPLWEPIKWKLRTNLTNLLNFRFRTTLMNKFFSSCEDCFIEETSDREWTHLRLLNARRYEYGILIPFFVLTYSILRYFKVIYSAFINLKIDFELIQYLEDPSYVIELQKLINPPVYNYLLYYIDIESLPSTKRKRKNRKLNLLITIIRELNGLCSSMDISEKEMEILVQFLMTEKNLSQFESNMTVSHIFLKKEFGDQITGQPGLIHLRYLAHTYQKGLMNYELNPFCLAENRIFLAFYQKITSSQILCQPNPKMPFSFHSGSLFSKGILLIGPMGTGRSYLIKSLAADSYVPLIRISLKKLLYGKFLYYPDPGRIPTEFNTFWRDTIDHFHITFELAKRMSPCIIWIPNIHELNVNDTITHLFGLGFTDSFLGLLLNYISRGGEKDSIRNILFIASTHIPQRVDPALIAPNRLDSSINIRMLVIPQRQREFPILLCSKGLYSEKEVSCPDEFGSITIDSDARDLAALANEALITSITRKKSVIDTNTIRYAIYSQICHLQSMDNQVGSSQNDERLIYKVGKAFIQNTLRRNSPMNPLSTKKELWKKRFCYLSEWYLEPSIAETTMKELTILPHILGCLAGSAARDSWSISERNRENWIPLDKFAEHDLDLASSLLESILVEFPFSRLGICRGKSDKDQSKFDKDQITFVPQPKMRNNHMIRFLKEYELKFTIATKKMYRDMDMDEELIKSVVWTPRTWRLSFLRSNRFDHTKTPNSLGSSYRFGSKKKAQIERSKFARQYPRQYKSSEKPTFCRGKRFLWDPFLFQEQRPVFSRREFFADEELLKRLYITYGSRRLLAKPNFFPKQSFQSAFHRYDSKYGINPGLIMNSWKPLSLRHRHIEHFKHIQEIGIHLERIQPYSSPYLYKCWLIENSRERVDRFQSLIHRQKRWLGTNSLLSNESFLYNTLFESYQYLSNLFLSNRVLLDQITKTLLEKECLFPNEIEHSIYTTGLRFDISWENLE.

Disordered regions lie at residues 176–197 (NKKDEMISENQGPPSKTHLENN) and 997–1018 (GRSTLSNSSKEEQKIKPSPHFN). 1372 to 1379 (GPMGTGRS) contributes to the ATP binding site.

It belongs to the Ycf2 family.

The protein localises to the plastid. The protein resides in the chloroplast stroma. In terms of biological role, probable ATPase of unknown function. Its presence in a non-photosynthetic plant (Epifagus virginiana) and experiments in tobacco indicate that it has an essential function which is probably not related to photosynthesis. In Pinus koraiensis (Korean pine), this protein is Protein Ycf2 (ycf2).